Reading from the N-terminus, the 347-residue chain is UDP-N-acetylenolpyruvoylglucosamine reductase (347 aa).

In terms of domain architecture, FAD-binding PCMH-type spans 24-195 (FDARARVAAR…VAVTFRLPKA (172 aa)). The active site involves Arg-171. The active-site Proton donor is the Ser-247. Glu-343 is an active-site residue.

Belongs to the MurB family. FAD is required as a cofactor.

It localises to the cytoplasm. It catalyses the reaction UDP-N-acetyl-alpha-D-muramate + NADP(+) = UDP-N-acetyl-3-O-(1-carboxyvinyl)-alpha-D-glucosamine + NADPH + H(+). It participates in cell wall biogenesis; peptidoglycan biosynthesis. Cell wall formation. In Burkholderia pseudomallei (strain 668), this protein is UDP-N-acetylenolpyruvoylglucosamine reductase.